The chain runs to 237 residues: 7-carboxy-7-deazaguanine synthase (237 aa).

Substrate-binding positions include leucine 15 to glycine 17 and arginine 30. In terms of domain architecture, Radical SAM core spans serine 21–aspartate 233. [4Fe-4S] cluster is bound by residues cysteine 34, cysteine 38, and cysteine 48. Threonine 50 serves as a coordination point for Mg(2+). Residue threonine 84 participates in substrate binding. Glycine 86 contributes to the S-adenosyl-L-methionine binding site.

Belongs to the radical SAM superfamily. 7-carboxy-7-deazaguanine synthase family. Homodimer. [4Fe-4S] cluster serves as cofactor. Requires S-adenosyl-L-methionine as cofactor. Mg(2+) is required as a cofactor.

The catalysed reaction is 6-carboxy-5,6,7,8-tetrahydropterin + H(+) = 7-carboxy-7-deazaguanine + NH4(+). Its pathway is purine metabolism; 7-cyano-7-deazaguanine biosynthesis. Catalyzes the complex heterocyclic radical-mediated conversion of 6-carboxy-5,6,7,8-tetrahydropterin (CPH4) to 7-carboxy-7-deazaguanine (CDG), a step common to the biosynthetic pathways of all 7-deazapurine-containing compounds. The chain is 7-carboxy-7-deazaguanine synthase from Leptospira interrogans serogroup Icterohaemorrhagiae serovar Lai (strain 56601).